Here is a 256-residue protein sequence, read N- to C-terminus: Pimeloyl-[acyl-carrier protein] methyl ester esterase (256 aa).

The AB hydrolase-1 domain maps to 15 to 242 (HLVLLHGWGL…AAHAPFISHP (228 aa)). Residues tryptophan 22, 82–83 (SL), and 143–147 (FLALQ) each bind substrate. Serine 82 functions as the Nucleophile in the catalytic mechanism. Residues aspartate 207 and histidine 235 contribute to the active site. A substrate-binding site is contributed by histidine 235.

This sequence belongs to the AB hydrolase superfamily. Carboxylesterase BioH family. In terms of assembly, monomer.

It is found in the cytoplasm. It carries out the reaction 6-carboxyhexanoyl-[ACP] methyl ester + H2O = 6-carboxyhexanoyl-[ACP] + methanol + H(+). It participates in cofactor biosynthesis; biotin biosynthesis. In terms of biological role, the physiological role of BioH is to remove the methyl group introduced by BioC when the pimeloyl moiety is complete. It allows to synthesize pimeloyl-ACP via the fatty acid synthetic pathway through the hydrolysis of the ester bonds of pimeloyl-ACP esters. This chain is Pimeloyl-[acyl-carrier protein] methyl ester esterase, found in Escherichia coli O7:K1 (strain IAI39 / ExPEC).